Consider the following 217-residue polypeptide: ATP phosphoribosyltransferase (217 aa).

It belongs to the ATP phosphoribosyltransferase family. Short subfamily. Heteromultimer composed of HisG and HisZ subunits.

It localises to the cytoplasm. It carries out the reaction 1-(5-phospho-beta-D-ribosyl)-ATP + diphosphate = 5-phospho-alpha-D-ribose 1-diphosphate + ATP. It participates in amino-acid biosynthesis; L-histidine biosynthesis; L-histidine from 5-phospho-alpha-D-ribose 1-diphosphate: step 1/9. Functionally, catalyzes the condensation of ATP and 5-phosphoribose 1-diphosphate to form N'-(5'-phosphoribosyl)-ATP (PR-ATP). Has a crucial role in the pathway because the rate of histidine biosynthesis seems to be controlled primarily by regulation of HisG enzymatic activity. The sequence is that of ATP phosphoribosyltransferase from Polaromonas naphthalenivorans (strain CJ2).